Here is a 1516-residue protein sequence, read N- to C-terminus: Receptor-type tyrosine-protein phosphatase S (1516 aa).

The signal sequence occupies residues 1–28 (MRILPSPGMPALLSLVSLLSVLLMGCVA). Topologically, residues 29 to 854 (ESPPVFIKKP…PQPIIDGEEG (826 aa)) are extracellular. Ig-like C2-type domains follow at residues 32-122 (PVFI…AKLT), 134-223 (PNID…ANLY), and 235-317 (PRFS…AQIT). Intrachain disulfides connect Cys-53/Cys-106 and Cys-155/Cys-206. Residues 67 to 71 (KKGKK) are important for binding to glycosaminoglycan chains. 2 N-linked (GlcNAc...) asparagine glycosylation sites follow: Asn-253 and Asn-298. A disulfide bond links Cys-256 and Cys-301. 4 Fibronectin type-III domains span residues 324 to 414 (APGT…TGEQ), 419 to 513 (APRN…TQQG), 517 to 606 (QPMN…TLQS), and 608 to 692 (LPKN…TAAN). The chain crosses the membrane as a helical span at residues 855–875 (LIWVIGPVLAVVFIICIVIAI). At 876–1516 (LLYKNKRKDS…YLGSFDHYAT (641 aa)) the chain is on the cytoplasmic side. 2 Tyrosine-protein phosphatase domains span residues 961–1216 (LSQE…LLEA) and 1248–1507 (MELE…ALEY). Residues Cys-1157 and Cys-1448 each act as phosphocysteine intermediate in the active site.

It belongs to the protein-tyrosine phosphatase family. Receptor class 2A subfamily. In terms of assembly, homodimer. Binding to large heparan sulfate proteoglycan structures promotes oligomerization. Binding to chondroitin sulfate proteoglycan does not lead to oligomerization. Interacts (via Ig-like domains) with NTRK1 and NTRK3, but does not form detectable complexes with NTRK2. Interacts (via extracellular domain) with the heparan sulfate proteoglycans AGRN and COL18A1. In terms of processing, a cleavage occurs, separating the extracellular domain from the transmembrane segment. This process called 'ectodomain shedding' is thought to be involved in receptor desensitization, signal transduction and/or membrane localization. In terms of tissue distribution, detected in embryonic brain, dorsal root ganglion and spinal cord. Detected in embryonic retina (at protein level). Detected in embryonic brain, spinal cord, dorsal root ganglion, trigeminal ganglion, ganglia associated with the precardinal vein and vagus nerve, the inner and outer nuclear layer of the retina, limb, breast muscle, heart, gut and lung.

Its subcellular location is the cell membrane. It is found in the cell projection. The protein resides in the axon. It localises to the perikaryon. The protein localises to the cytoplasmic vesicle. Its subcellular location is the secretory vesicle. It is found in the synaptic vesicle membrane. The protein resides in the synapse. It localises to the synaptosome. The protein localises to the postsynaptic density. Its subcellular location is the neuron projection. It is found in the growth cone. The enzyme catalyses O-phospho-L-tyrosyl-[protein] + H2O = L-tyrosyl-[protein] + phosphate. In terms of biological role, cell surface receptor that binds to glycosaminoglycans, including chondroitin sulfate proteoglycans and heparan sulfate proteoglycans. Binding to chondroitin sulfate and heparan sulfate proteoglycans has opposite effects on PTPRS oligomerization and regulation of neurite outgrowth. Contributes to the inhibition of neurite and axonal outgrowth by chondroitin sulfate proteoglycans, also after nerve transection. Plays a role in stimulating neurite outgrowth in response to the heparan sulfate proteoglycan GPC2. Required for normal brain development, especially for normal development of the pituitary gland and the olfactory bulb. Functions as tyrosine phosphatase. Mediates dephosphorylation of NTRK1, NTRK2 and NTRK3. Plays a role in down-regulation of signaling cascades that lead to the activation of Akt and MAP kinases. Down-regulates TLR9-mediated activation of NF-kappa-B, as well as production of TNF, interferon alpha and interferon beta. The chain is Receptor-type tyrosine-protein phosphatase S (PTPRS) from Gallus gallus (Chicken).